The following is a 581-amino-acid chain: Proline--tRNA ligase 1 (581 aa).

Belongs to the class-II aminoacyl-tRNA synthetase family. ProS type 1 subfamily. In terms of assembly, homodimer.

Its subcellular location is the cytoplasm. The catalysed reaction is tRNA(Pro) + L-proline + ATP = L-prolyl-tRNA(Pro) + AMP + diphosphate. Functionally, catalyzes the attachment of proline to tRNA(Pro) in a two-step reaction: proline is first activated by ATP to form Pro-AMP and then transferred to the acceptor end of tRNA(Pro). As ProRS can inadvertently accommodate and process non-cognate amino acids such as alanine and cysteine, to avoid such errors it has two additional distinct editing activities against alanine. One activity is designated as 'pretransfer' editing and involves the tRNA(Pro)-independent hydrolysis of activated Ala-AMP. The other activity is designated 'posttransfer' editing and involves deacylation of mischarged Ala-tRNA(Pro). The misacylated Cys-tRNA(Pro) is not edited by ProRS. The protein is Proline--tRNA ligase 1 of Rhodococcus jostii (strain RHA1).